The sequence spans 1587 residues: NHS-like protein 1 (1587 aa).

Ser-24 is subject to Phosphoserine. Disordered stretches follow at residues 140–163 and 176–202; these read FAAG…KCSL and RPKT…PLPT. Positions 179–196 are enriched in polar residues; sequence TPTSGDFSDLHTQTNWTK. 2 positions are modified to phosphoserine: Ser-197 and Ser-328. Polar residues predominate over residues 431-446; it reads SAGQLDSRTPGSSSYS. Disordered stretches follow at residues 431 to 470 and 549 to 584; these read SAGQ…PRHH and SEPW…VSSC. Positions 449 to 470 are enriched in basic and acidic residues; that stretch reads KPRDRPTPRCSVKDDHQSPRHH. Ser-563 is modified (phosphoserine). Residues 573 to 584 are compositionally biased toward polar residues; it reads GCSTPTSNVSSC. Phosphoserine is present on Ser-629. Disordered regions lie at residues 661-687, 705-767, and 789-1059; these read KAKK…QTNG, SLPG…SSVK, and NPTG…RPPM. Positions 705–720 are enriched in low complexity; that stretch reads SLPGKGGSSPSQSPCS. Composition is skewed to polar residues over residues 730-750, 757-767, 792-801, and 838-855; these read SRSQ…TPNV, TPSQSDTSSVK, GGCSANTEAA, and RVTS…TPTA. Over residues 885–911 the composition is skewed to low complexity; sequence SLISSMSISSSSTSLSSNTSTEGSGTM. 3 stretches are compositionally biased toward pro residues: residues 923–934, 958–972, and 998–1021; these read APPPPPLPPLPS, PLPP…PPEA, and SLPP…PPLD. The segment covering 1040 to 1055 has biased composition (basic and acidic residues); that stretch reads SSREALRRPANKEEGC. Position 1079 is a phosphoserine (Ser-1079). Disordered stretches follow at residues 1083–1534 and 1565–1587; these read AVLF…ARRA and VDGI…EQKS. Polar residues-rich tracts occupy residues 1089–1099 and 1112–1141; these read PSAQEQRTPTA and SRNS…SQSQ. A phosphoserine mark is found at Ser-1157 and Ser-1218. The segment covering 1222 to 1234 has biased composition (basic and acidic residues); sequence AEGEAVRSQEEKS. Positions 1275–1285 are enriched in polar residues; sequence QPNTSPGPTQE. A compositionally biased stretch (basic and acidic residues) spans 1360-1370; the sequence is GRKDSEDDHTR. Residues Ser-1373 and Ser-1375 each carry the phosphoserine modification. Thr-1379 carries the phosphothreonine modification. Over residues 1392–1409 the composition is skewed to polar residues; that stretch reads QVGSIQRSIKKSTTSSDN. The span at 1434-1447 shows a compositional bias: basic and acidic residues; the sequence is KSTDPRFQRSRSEP. 2 stretches are compositionally biased toward low complexity: residues 1448–1460 and 1484–1503; these read SADS…SCSP and SGPR…SRYS. Polar residues predominate over residues 1576–1587; that stretch reads PSEQCGGTEQKS.

The protein belongs to the NHS family.

This Mus musculus (Mouse) protein is NHS-like protein 1 (Nhsl1).